Reading from the N-terminus, the 230-residue chain is Lipoprotein-releasing system ATP-binding protein LolD (230 aa).

The ABC transporter domain occupies 10-228 (LRAEHLSKVY…QLHMANGRLL (219 aa)). 46–53 (GASGSGKS) lines the ATP pocket.

It belongs to the ABC transporter superfamily. Lipoprotein translocase (TC 3.A.1.125) family. As to quaternary structure, the complex is composed of two ATP-binding proteins (LolD) and two transmembrane proteins (LolC and LolE).

It is found in the cell inner membrane. In terms of biological role, part of the ABC transporter complex LolCDE involved in the translocation of mature outer membrane-directed lipoproteins, from the inner membrane to the periplasmic chaperone, LolA. Responsible for the formation of the LolA-lipoprotein complex in an ATP-dependent manner. This chain is Lipoprotein-releasing system ATP-binding protein LolD, found in Bordetella avium (strain 197N).